The sequence spans 207 residues: Small ribosomal subunit protein uS4 (207 aa).

Residues Lys31–Leu54 form a disordered region. The segment covering Gly42–Phe52 has biased composition (polar residues). Positions Ser97–Glu158 constitute an S4 RNA-binding domain.

The protein belongs to the universal ribosomal protein uS4 family. As to quaternary structure, part of the 30S ribosomal subunit. Contacts protein S5. The interaction surface between S4 and S5 is involved in control of translational fidelity.

Its function is as follows. One of the primary rRNA binding proteins, it binds directly to 16S rRNA where it nucleates assembly of the body of the 30S subunit. Functionally, with S5 and S12 plays an important role in translational accuracy. This Methylibium petroleiphilum (strain ATCC BAA-1232 / LMG 22953 / PM1) protein is Small ribosomal subunit protein uS4.